The primary structure comprises 342 residues: Nicotinate-nucleotide--dimethylbenzimidazole phosphoribosyltransferase (342 aa).

Glu311 (proton acceptor) is an active-site residue.

Belongs to the CobT family.

The enzyme catalyses 5,6-dimethylbenzimidazole + nicotinate beta-D-ribonucleotide = alpha-ribazole 5'-phosphate + nicotinate + H(+). It participates in nucleoside biosynthesis; alpha-ribazole biosynthesis; alpha-ribazole from 5,6-dimethylbenzimidazole: step 1/2. In terms of biological role, catalyzes the synthesis of alpha-ribazole-5'-phosphate from nicotinate mononucleotide (NAMN) and 5,6-dimethylbenzimidazole (DMB). The chain is Nicotinate-nucleotide--dimethylbenzimidazole phosphoribosyltransferase from Shewanella loihica (strain ATCC BAA-1088 / PV-4).